The following is a 467-amino-acid chain: MSKFPTVSEILSGKVAVGEEVAVRGWVRTRRDSKAGLSFLAVYDGSCFDPLQSIINNDLANYNDEVLRLTAGCSVIVTGKVVESPAEGQAVELHATHVEVVGWVEDPDTYPMAAKRHSIEYLREVAHLRPRTNLIGAVARVRHCLAQAIHRFFNEQGFYWVATPLITASDTEGAGEMFRVSTLDLESLPRTDEGKVDFSQDFFGKESFLTVSGQLNGETYACALSKVYTFGPTFRAENSNTTRHLAEFWMVEPEFAFATLADNAKLAEDMLKYVFKAVLEERKDDMQFFAKHIDKDVITRLENFIASPFAQVDYTDAIEILLKSGKEFEFPVSWGIDLSSEHERFLAEEYFKSPVVVKNYPKDIKAFYMRLNDDGKTVAAMDVLAPGIGEIIGGSQREERLDVLDTRMVEMGLNPEDYWWYRDLRKYGTVPHSGFGLGFERLIVYVTGLQNIREVIPFPRAPRNANF.

This sequence belongs to the class-II aminoacyl-tRNA synthetase family. Homodimer.

It is found in the cytoplasm. The catalysed reaction is tRNA(Asn) + L-asparagine + ATP = L-asparaginyl-tRNA(Asn) + AMP + diphosphate + H(+). This is Asparagine--tRNA ligase from Actinobacillus pleuropneumoniae serotype 3 (strain JL03).